Here is a 384-residue protein sequence, read N- to C-terminus: Lipoyl synthase 2, chloroplastic (384 aa).

A chloroplast-targeting transit peptide spans 1–48 (MAAYCSRVYHHHPVSPSTMQGSLARPSIHAGSASLTFRARPNSVSIVR). Cysteine 108, cysteine 113, cysteine 119, cysteine 145, cysteine 149, cysteine 152, and serine 360 together coordinate [4Fe-4S] cluster. In terms of domain architecture, Radical SAM core spans 128 to 349 (GDGDGIATAT…KEYGESLGFL (222 aa)).

It belongs to the radical SAM superfamily. Lipoyl synthase family. Requires [4Fe-4S] cluster as cofactor.

It localises to the plastid. Its subcellular location is the chloroplast. It carries out the reaction [[Fe-S] cluster scaffold protein carrying a second [4Fe-4S](2+) cluster] + N(6)-octanoyl-L-lysyl-[protein] + 2 oxidized [2Fe-2S]-[ferredoxin] + 2 S-adenosyl-L-methionine + 4 H(+) = [[Fe-S] cluster scaffold protein] + N(6)-[(R)-dihydrolipoyl]-L-lysyl-[protein] + 4 Fe(3+) + 2 hydrogen sulfide + 2 5'-deoxyadenosine + 2 L-methionine + 2 reduced [2Fe-2S]-[ferredoxin]. It functions in the pathway protein modification; protein lipoylation via endogenous pathway; protein N(6)-(lipoyl)lysine from octanoyl-[acyl-carrier-protein]: step 2/2. Its function is as follows. Catalyzes the radical-mediated insertion of two sulfur atoms into the C-6 and C-8 positions of the octanoyl moiety bound to the lipoyl domains of lipoate-dependent enzymes, thereby converting the octanoylated domains into lipoylated derivatives. The polypeptide is Lipoyl synthase 2, chloroplastic (Oryza sativa subsp. indica (Rice)).